The following is a 511-amino-acid chain: Maturase K (511 aa).

The protein belongs to the intron maturase 2 family. MatK subfamily.

The protein localises to the plastid. The protein resides in the chloroplast. Its function is as follows. Usually encoded in the trnK tRNA gene intron. Probably assists in splicing its own and other chloroplast group II introns. In Mandragora officinarum (Mandrake), this protein is Maturase K.